A 485-amino-acid polypeptide reads, in one-letter code: Cysteine--tRNA ligase (485 aa).

Residue cysteine 28 participates in Zn(2+) binding. Residues methionine 30–histidine 40 carry the 'HIGH' region motif. Zn(2+) is bound by residues cysteine 212, histidine 237, and glutamate 241. Positions lysine 269–serine 273 match the 'KMSKS' region motif. Residue lysine 272 participates in ATP binding.

It belongs to the class-I aminoacyl-tRNA synthetase family. As to quaternary structure, monomer. Zn(2+) is required as a cofactor.

It is found in the cytoplasm. The enzyme catalyses tRNA(Cys) + L-cysteine + ATP = L-cysteinyl-tRNA(Cys) + AMP + diphosphate. The polypeptide is Cysteine--tRNA ligase (Bordetella bronchiseptica (strain ATCC BAA-588 / NCTC 13252 / RB50) (Alcaligenes bronchisepticus)).